Here is a 727-residue protein sequence, read N- to C-terminus: Capsid protein VP1 (727 aa).

The segment covering 1–10 has biased composition (basic residues); sequence MAPPAKRARR. Disordered stretches follow at residues 1-38, 95-120, and 141-184; these read MAPPAKRARRGLVPPGYKYLGPGNSLDQGEPTNPSDAA, VLTDTPDHPSTSRPTKPTKRSKPPPH, and LAPM…VGIS. A Nuclear localization signal motif is present at residues 4-13; sequence PAKRARRGLV. Residues 19–64 form a phospholipase A2-like region; sequence YLGPGNSLDQGEPTNPSDAAAKEHDEAYAAYLRSGKNPYLYFSPAD. Polar residues predominate over residues 25–35; that stretch reads SLDQGEPTNPS. Residues 166–183 are compositionally biased toward gly residues; the sequence is SGNGSGGGGGGGSGGVGI. Asn-323 contributes to the Mg(2+) binding site. A disulfide bond links Cys-633 and Cys-637.

It belongs to the parvoviridae capsid protein family. In terms of assembly, interacts with host TFRC.

It is found in the virion. It localises to the host nucleus. In terms of biological role, capsid protein self-assembles to form an icosahedral capsid with a T=1 symmetry, about 22 nm in diameter, and consisting of 60 copies of two size variants of the capsid proteins, VP1 and VP2, which differ by the presence of an N-terminal extension in the minor protein VP1. The capsid encapsulates the genomic ssDNA. Capsid proteins are responsible for the attachment to host cell receptors. This attachment induces virion internalization predominantly through clathrin-dependent endocytosis. Binding to the host receptors also induces capsid rearrangements leading to surface exposure of VP1 N-terminus, specifically its phospholipase A2-like region and putative nuclear localization signal(s). VP1 N-terminus might serve as a lipolytic enzyme to breach the endosomal membrane during entry into host cell and might contribute to virus transport to the nucleus. The sequence is that of Capsid protein VP1 from Feline panleukopenia virus (strain 193) (FPV).